Reading from the N-terminus, the 901-residue chain is HTH-type transcriptional regulator MalT (901 aa).

39–46 (SPAGYGKT) lines the ATP pocket. Positions 829–894 (ELIRTSPLTQ…AAVQHAQKLL (66 aa)) constitute an HTH luxR-type domain. The segment at residues 853-872 (NEQIAGELEVAATTIKTHIR) is a DNA-binding region (H-T-H motif).

Belongs to the MalT family. As to quaternary structure, monomer in solution. Oligomerizes to an active state in the presence of the positive effectors ATP and maltotriose.

Its activity is regulated as follows. Activated by ATP and maltotriose, which are both required for DNA binding. In terms of biological role, positively regulates the transcription of the maltose regulon whose gene products are responsible for uptake and catabolism of malto-oligosaccharides. Specifically binds to the promoter region of its target genes, recognizing a short DNA motif called the MalT box. The sequence is that of HTH-type transcriptional regulator MalT from Escherichia coli (strain 55989 / EAEC).